We begin with the raw amino-acid sequence, 122 residues long: Ribonuclease P protein component 1 (122 aa).

The protein belongs to the eukaryotic/archaeal RNase P protein component 1 family. As to quaternary structure, consists of a catalytic RNA component and at least 4-5 protein subunits.

The protein localises to the cytoplasm. The enzyme catalyses Endonucleolytic cleavage of RNA, removing 5'-extranucleotides from tRNA precursor.. In terms of biological role, part of ribonuclease P, a protein complex that generates mature tRNA molecules by cleaving their 5'-ends. In Thermococcus sibiricus (strain DSM 12597 / MM 739), this protein is Ribonuclease P protein component 1.